The chain runs to 437 residues: MDPESIMAADGTDSAPANGGLAMENVCVKENGAVSVETVDTTSESQNENSANSSTLDTIEHVKEAAEGTQVEHVDDSKCMKGEKAQRKPRHEKLSGGKNNSSVHIKKSKEGKSADAKVAASNGSVAPNVQTTNPLKSKSFNGREAQVTKQGKHDSAPAESADGEKVKPKSQKKQAHETSEDDTQSSNSPKADDGKPRKVGALPNYGFSFKCDQRAEKRKEFYVKLEEKTHAKEEEINSMQAKSKETQEAELRMLRKSLNFKATPMPSFYQEPQPPKTELKKIPPTRPKSPKLGRKKTASGADSEETQTPRLGRLSLDERASKDNPTAKGIMPTVDLKKQPVRKSLPRLPSQKTVLPDGKPAPAKAAIIPAKVRPEKKKLEKDAETVNQTSHPTEEEAQVTVSSNADVEDSHETVSPRMNEDRADKSIEVSEAVAVEH.

Disordered stretches follow at residues M1–A22, T38–K210, and L254–H437. Residues T41–T55 show a composition bias toward low complexity. Residues T58 to Q86 are compositionally biased toward basic and acidic residues. The segment covering S121–F140 has biased composition (polar residues). Basic and acidic residues predominate over residues G151 to K167. Residue S208 is modified to Phosphoserine. The segment covering K288–T297 has biased composition (basic residues). Over residues P360–K371 the composition is skewed to low complexity. Over residues E408 to H437 the composition is skewed to basic and acidic residues. At S415 the chain carries Phosphoserine.

This sequence belongs to the TPX2 family. In terms of tissue distribution, expressed in seedlings.

Its subcellular location is the cytoplasm. It localises to the cytoskeleton. Its function is as follows. Microtubule-associated protein (MAP) that regulates the orientation of interphase cortical microtubules. The sequence is that of Protein WVD2-like 5 from Arabidopsis thaliana (Mouse-ear cress).